We begin with the raw amino-acid sequence, 194 residues long: Protein GrpE 1 (194 aa).

A disordered region spans residues Met-1–Asn-22.

Belongs to the GrpE family. As to quaternary structure, homodimer.

It localises to the cytoplasm. In terms of biological role, participates actively in the response to hyperosmotic and heat shock by preventing the aggregation of stress-denatured proteins, in association with DnaK and GrpE. It is the nucleotide exchange factor for DnaK and may function as a thermosensor. Unfolded proteins bind initially to DnaJ; upon interaction with the DnaJ-bound protein, DnaK hydrolyzes its bound ATP, resulting in the formation of a stable complex. GrpE releases ADP from DnaK; ATP binding to DnaK triggers the release of the substrate protein, thus completing the reaction cycle. Several rounds of ATP-dependent interactions between DnaJ, DnaK and GrpE are required for fully efficient folding. The sequence is that of Protein GrpE 1 from Buchnera aphidicola subsp. Acyrthosiphon pisum (strain APS) (Acyrthosiphon pisum symbiotic bacterium).